The sequence spans 321 residues: Probable 1-aminocyclopropane-1-carboxylate oxidase (321 aa).

The Fe2OG dioxygenase domain maps to 159-259; it reads PTFGTKVSNY…RMSIASFYNP (101 aa). Fe cation contacts are provided by His183, Asp185, and His240.

The protein belongs to the iron/ascorbate-dependent oxidoreductase family. Fe cation serves as cofactor.

The catalysed reaction is 1-aminocyclopropane-1-carboxylate + L-ascorbate + O2 = ethene + L-dehydroascorbate + hydrogen cyanide + CO2 + 2 H2O. The protein operates within alkene biosynthesis; ethylene biosynthesis via S-adenosyl-L-methionine; ethylene from S-adenosyl-L-methionine: step 2/2. This chain is Probable 1-aminocyclopropane-1-carboxylate oxidase (ACO), found in Dianthus caryophyllus (Carnation).